We begin with the raw amino-acid sequence, 666 residues long: Peptidase S41 family protein phomP1 (666 aa).

An N-terminal signal peptide occupies residues 1-27 (MSSFLVQTAVVRLFLLGVVFWFPFALS). N-linked (GlcNAc...) asparagine glycans are attached at residues N70, N214, and N234. Residues 303–504 (DVAVLQITSF…LLQAQGVRTV (202 aa)) are peptidase S41 domain. Residues N555 and N612 are each glycosylated (N-linked (GlcNAc...) asparagine).

The protein belongs to the peptidase S41A family.

The protein operates within mycotoxin biosynthesis. Its function is as follows. Peptidase S41 family protein; part of the gene cluster that mediates the biosynthesis of the phomopsins, a group of hexapeptide mycotoxins which infects lupins and causes lupinosis disease in livestock. Within the pathway, phomP1 and phomP1' are probably involved in the processing of the phomA and phomA' precursors. The pathway starts with the processing of the precursor phomA by several endopeptidases including kexin proteases as well as the cluster-specific S41 family peptidase phomP1 and the oligopeptidase phomG to produce 10 identical copies of the hexapeptide Tyr-Val-Ile-Pro-Ile-Asp. After being excised from the precursor peptide, the core peptides are cyclized and modified post-translationally by enzymes encoded within the gene cluster. The timing and order of proteolysis of the phomA precursor and PTMs are still unknown. Two tyrosinase-like enzymes, phomQ1 and phomQ2, catalyze the chlorination and hydroxylation of Tyr, respectively. PhomYb, is proposed to be involved in the construction of the macrocyclic structure. The other 4 ustYa family proteins may be involved in PTMs that generate the unique structure of phomopsin A. PhomYa is required for the hydroxylation of C-beta of Tyr. PhomYc, phomYd, and phomYe are responsible for the biosynthesis of 2,3-dehydroisoleucine (dIle), 2,3-dehydroaspartic acid (dAsp), and 3,4-dehydroproline (dPro), respectively. While dIle formation by phomYc is indispensable for the installation of dAsp by phomYd, the order of the other PTMs have not been elucidated yet. Most of the biosynthetic enzymes likely have broad substrate specificity, and thus, there might be a metabolic grid from a precursor to phomopsin A. The enzyme(s) responsible for the biosynthesis of 3,4-dehydrovaline (dVal) have also not been identified yet. Finally, phomM acts as an S-adenosylmethionine-dependent alpha-N-methyltransferase that catalyzes two successive N-methylation reactions, converting N-desmethyl-phomopsin A to phomopsin A and phomopsin A further to an N,N-dimethylated congener called phomopsin E. The sequence is that of Peptidase S41 family protein phomP1 from Diaporthe leptostromiformis (Lupinosis disease fungus).